A 335-amino-acid chain; its full sequence is Probable nicotianamine synthase 3 (335 aa).

This sequence belongs to the nicotianamine synthase (NAS)-like family.

The catalysed reaction is 3 S-adenosyl-L-methionine = nicotianamine + 3 S-methyl-5'-thioadenosine + 3 H(+). Synthesizes nicotianamine, a polyamine that is the first intermediate in the synthesis of the phytosiderophores of the mugineic acid type found in gramineae which serves as a sensor for the physiological iron status within the plant, and/or might be involved in the transport of iron. The chain is Probable nicotianamine synthase 3 (NAS3) from Hordeum vulgare (Barley).